The primary structure comprises 243 residues: Carboxy-S-adenosyl-L-methionine synthase (243 aa).

S-adenosyl-L-methionine is bound by residues Tyr-40, 65–67 (GSS), 90–91 (DN), 118–119 (DI), Asn-133, and Arg-200.

Belongs to the class I-like SAM-binding methyltransferase superfamily. Cx-SAM synthase family. Homodimer.

The enzyme catalyses prephenate + S-adenosyl-L-methionine = carboxy-S-adenosyl-L-methionine + 3-phenylpyruvate + H2O. Functionally, catalyzes the conversion of S-adenosyl-L-methionine (SAM) to carboxy-S-adenosyl-L-methionine (Cx-SAM). This chain is Carboxy-S-adenosyl-L-methionine synthase, found in Shewanella denitrificans (strain OS217 / ATCC BAA-1090 / DSM 15013).